Consider the following 491-residue polypeptide: UDP-N-acetylmuramate--L-alanine ligase (491 aa).

126–132 (GTHGKTT) is an ATP binding site.

It belongs to the MurCDEF family.

Its subcellular location is the cytoplasm. It catalyses the reaction UDP-N-acetyl-alpha-D-muramate + L-alanine + ATP = UDP-N-acetyl-alpha-D-muramoyl-L-alanine + ADP + phosphate + H(+). The protein operates within cell wall biogenesis; peptidoglycan biosynthesis. Its function is as follows. Cell wall formation. This Salmonella paratyphi C (strain RKS4594) protein is UDP-N-acetylmuramate--L-alanine ligase.